Reading from the N-terminus, the 366-residue chain is Aminomethyltransferase (366 aa).

It belongs to the GcvT family. In terms of assembly, the glycine cleavage system is composed of four proteins: P, T, L and H.

It carries out the reaction N(6)-[(R)-S(8)-aminomethyldihydrolipoyl]-L-lysyl-[protein] + (6S)-5,6,7,8-tetrahydrofolate = N(6)-[(R)-dihydrolipoyl]-L-lysyl-[protein] + (6R)-5,10-methylene-5,6,7,8-tetrahydrofolate + NH4(+). Functionally, the glycine cleavage system catalyzes the degradation of glycine. The sequence is that of Aminomethyltransferase from Bacillus mycoides (strain KBAB4) (Bacillus weihenstephanensis).